Reading from the N-terminus, the 339-residue chain is Protein FAM76B (339 aa).

Ala2 bears the N-acetylalanine mark. Phosphoserine occurs at positions 22 and 148. Residues 144-243 (EQRKSLGSSH…INQSADSGGT (100 aa)) form a disordered region. Residues 148–160 (SLGSSHSNSSSSS) are compositionally biased toward low complexity. A compositionally biased stretch (basic residues) spans 167–189 (HHSKHHHHHHHHHHRHSSGHHKV). Position 193 is a phosphoserine (Ser193). Thr215 bears the Phosphothreonine mark. Over residues 215–224 (TPKKKPKLES) the composition is skewed to basic and acidic residues. Residues 228–243 (NGDSSSINQSADSGGT) are compositionally biased toward polar residues. Positions 248–328 (LISQLKEEVM…QVAALSKGKK (81 aa)) form a coiled coil.

Belongs to the FAM76 family. As to quaternary structure, interacts with HNRNPA2B1 (via C-terminus); the interaction results in retention of HNRNPA2B1 in the nucleus and inhibition of the NF-kappa-B-mediated inflammatory pathway.

It is found in the nucleus speckle. Its function is as follows. Negatively regulates the NF-kappa-B-mediated inflammatory pathway by preventing the translocation of HNRNPA2B1 from the nucleus to the cytoplasm. Inhibits the PI3K/Akt/NF-kappa-B pathway-mediated polarization of M1 macrophages by binding to and stabilizing PIK3CD mRNA, resulting in increased levels of PIK3CD protein and increased levels of phosphorylated downstream target AKT which leads to decreased NF-kappa-B signaling. The polypeptide is Protein FAM76B (Fam76b) (Mus musculus (Mouse)).